The primary structure comprises 319 residues: Ataxin-3 homolog (319 aa).

Residues 8-179 (ISSIFFERQQ…NSEADDFITL (172 aa)) form the Josephin domain. Cys-21 acts as the Nucleophile in catalysis. The active-site Proton acceptor is the His-118. Asn-133 is an active-site residue. UIM domains are found at residues 218-237 (QEDR…KESS) and 242-261 (SDED…DPNI). Positions 253-319 (MSLSQDPNIP…EKKSQNVPEE (67 aa)) are disordered. Over residues 254–267 (SLSQDPNIPSTSAA) the composition is skewed to polar residues. Basic and acidic residues predominate over residues 295–313 (QQRRDRAKFLEKLEEEKKS). Positions 297–300 (RRDR) are interaction with cdc-48.1 and cdc-48.2.

Forms a complex composed of deubiquitinating enzyme atx-3, adapter ubxn-5 and cdc-48.1. Forms a complex composed of deubiquitinating enzyme atx-3, E4 ubiquitin-protein ligase ufd-2 and cdc-48.1. Interacts (via RRDR motif) with cdc-48.1 (via N-terminus) and cdc-48.2 (via N-terminus); the interaction with cdc-48.1 is not required for atx-3 enzymatic activity. Interacts (via C-terminus) with ubxn-5. May interact with ned-8.

The protein localises to the cytoplasm. Its subcellular location is the nucleus. It is found in the nucleolus. It carries out the reaction Thiol-dependent hydrolysis of ester, thioester, amide, peptide and isopeptide bonds formed by the C-terminal Gly of ubiquitin (a 76-residue protein attached to proteins as an intracellular targeting signal).. Acts as a chain editing deubiquitinating enzyme that binds and cleaves 'Lys-48'-linked polyubiquitin chains, with a preference for chains containing four or more ubiquitin molecules thereby modulating protein degradation by the ubiquitin-proteasome pathway. Probably by regulating the IGF-1-insulin-like pathway, regulates lifespan. Regulates germline DNA double-strand-break repair and apoptosis in response to DNA damage by recruiting E4 ubiquitin-protein ligase ufd-2 to DNA repair foci. Interacts with key regulators of transcription and represses transcription. Acts as a histone-binding protein that regulates transcription. This is Ataxin-3 homolog from Caenorhabditis briggsae.